The primary structure comprises 386 residues: Phosphoglycerate kinase (386 aa).

Residues 21-23, R36, 59-62, R113, and R146 each bind substrate; these read DLN and HLGR. ATP is bound by residues K197, E314, and 340–343; that span reads GGDT.

The protein belongs to the phosphoglycerate kinase family. Monomer.

It is found in the cytoplasm. The enzyme catalyses (2R)-3-phosphoglycerate + ATP = (2R)-3-phospho-glyceroyl phosphate + ADP. The protein operates within carbohydrate degradation; glycolysis; pyruvate from D-glyceraldehyde 3-phosphate: step 2/5. The polypeptide is Phosphoglycerate kinase (Vibrio vulnificus (strain CMCP6)).